A 485-amino-acid chain; its full sequence is uncharacterized protein (485 aa).

13 helical membrane passes run 13–33 (WSAL…VILS), 38–58 (PFEF…DMLA), 79–99 (ALYW…IILS), 111–131 (LSFL…GQQY), 160–180 (VIIG…LLTV), 211–231 (LLFS…SSIT), 234–254 (IVAR…FNVA), 297–317 (INFP…YLVF), 321–341 (WLFI…RMVA), 365–385 (IIIF…VGAA), 388–408 (FLIC…KPVL), 420–440 (FIPF…DIYI), and 445–465 (LTFF…TIFI).

The protein belongs to the polysaccharide synthase family.

It is found in the cell membrane. This is an uncharacterized protein from Klebsiella pneumoniae.